The chain runs to 306 residues: Beta-lactamase 1 (306 aa).

Residues M1 to K43 form the signal peptide. Catalysis depends on S89, which acts as the Acyl-ester intermediate. The active-site Proton acceptor is the E185. K251–G253 serves as a coordination point for substrate.

It belongs to the class-A beta-lactamase family.

Its subcellular location is the secreted. It carries out the reaction a beta-lactam + H2O = a substituted beta-amino acid. In terms of biological role, acts preferentially on penicillins. The polypeptide is Beta-lactamase 1 (penPC) (Bacillus cereus).